A 682-amino-acid chain; its full sequence is Beta-galactosidase (682 aa).

The first 23 residues, 1 to 23 (MPGFLVRILPLLLPLLLLGPTRG), serve as a signal peptide directing secretion. The propeptide occupies 24-28 (LRNAT). N-linked (GlcNAc...) asparagine glycosylation occurs at Asn26. Tyr83, Glu129, and Asn187 together coordinate substrate. Glu188 acts as the Proton donor in catalysis. Cys195 and Cys230 are joined by a disulfide. Asn247 carries an N-linked (GlcNAc...) asparagine glycan. Glu268 functions as the Nucleophile in the catalytic mechanism. Tyr333 is a binding site for substrate. Asn464, Asn498, Asn545, and Asn555 each carry an N-linked (GlcNAc...) asparagine glycan. A disulfide bridge links Cys626 with Cys634.

It belongs to the glycosyl hydrolase 35 family. In terms of assembly, homodimer. May form higher multimers.

The protein localises to the lysosome. It carries out the reaction Hydrolysis of terminal non-reducing beta-D-galactose residues in beta-D-galactosides.. In terms of biological role, cleaves beta-linked terminal galactosyl residues from gangliosides, glycoproteins, and glycosaminoglycans. The chain is Beta-galactosidase (GLB1) from Macaca fascicularis (Crab-eating macaque).